We begin with the raw amino-acid sequence, 787 residues long: Protocadherin beta-15 (787 aa).

A signal peptide spans 1–26; that stretch reads MEPAGERFPEQRQVLILLLLLEVTLA. The Extracellular segment spans residues 27–690; the sequence is GWEPRRYSVM…AQADSLTVYL (664 aa). Cadherin domains are found at residues 35–133, 138–242, 247–347, 352–451, and 456–561; these read VMEE…SPEF, ITLK…APEF, YEVQ…FPEL, LTSP…APAF, and YTLF…SPFV. N-linked (GlcNAc...) asparagine glycosylation is found at Asn-418 and Asn-436. Residue Asn-567 is glycosylated (N-linked (GlcNAc...) asparagine). Positions 568 to 671 constitute a Cadherin 6 domain; sequence GSAPCTELVP…LVDGFSQPYL (104 aa). The helical transmembrane segment at 691-711 threads the bilayer; the sequence is VVALASVSSLFLFSVLLFVAV. Over 712–787 the chain is Cytoplasmic; sequence RLCRRSRAAS…DSRRKSEFLE (76 aa).

The protein resides in the cell membrane. Functionally, potential calcium-dependent cell-adhesion protein. May be involved in the establishment and maintenance of specific neuronal connections in the brain. The sequence is that of Protocadherin beta-15 (PCDHB15) from Pan troglodytes (Chimpanzee).